Reading from the N-terminus, the 584-residue chain is Probable lysosomal cobalamin transporter (584 aa).

10 consecutive transmembrane segments (helical) span residues 8 to 28, 46 to 66, 93 to 113, 144 to 164, 189 to 209, 313 to 333, 350 to 370, 376 to 396, 421 to 441, and 509 to 529; these read LIWI…STFV, IFTL…VALV, TVVY…IVPF, TLVF…VPVA, ALTF…VIYS, LLGG…MLLT, ILGK…AASV, VIFI…IATI, ATVM…MIVV, and GIVD…VLLI.

This sequence belongs to the LIMR family. LMBRD1 subfamily.

Its subcellular location is the lysosome membrane. Probable lysosomal cobalamin transporter. Required to export cobalamin from lysosomes allowing its conversion to cofactors. The chain is Probable lysosomal cobalamin transporter from Coccidioides immitis (strain RS) (Valley fever fungus).